The primary structure comprises 182 residues: Crossover junction endodeoxyribonuclease RuvC (182 aa).

Residues D7, E69, and D141 contribute to the active site. Positions 7, 69, and 141 each coordinate Mg(2+).

The protein belongs to the RuvC family. Homodimer which binds Holliday junction (HJ) DNA. The HJ becomes 2-fold symmetrical on binding to RuvC with unstacked arms; it has a different conformation from HJ DNA in complex with RuvA. In the full resolvosome a probable DNA-RuvA(4)-RuvB(12)-RuvC(2) complex forms which resolves the HJ. The cofactor is Mg(2+).

The protein localises to the cytoplasm. It carries out the reaction Endonucleolytic cleavage at a junction such as a reciprocal single-stranded crossover between two homologous DNA duplexes (Holliday junction).. In terms of biological role, the RuvA-RuvB-RuvC complex processes Holliday junction (HJ) DNA during genetic recombination and DNA repair. Endonuclease that resolves HJ intermediates. Cleaves cruciform DNA by making single-stranded nicks across the HJ at symmetrical positions within the homologous arms, yielding a 5'-phosphate and a 3'-hydroxyl group; requires a central core of homology in the junction. The consensus cleavage sequence is 5'-(A/T)TT(C/G)-3'. Cleavage occurs on the 3'-side of the TT dinucleotide at the point of strand exchange. HJ branch migration catalyzed by RuvA-RuvB allows RuvC to scan DNA until it finds its consensus sequence, where it cleaves and resolves the cruciform DNA. This chain is Crossover junction endodeoxyribonuclease RuvC, found in Albidiferax ferrireducens (strain ATCC BAA-621 / DSM 15236 / T118) (Rhodoferax ferrireducens).